Here is an 89-residue protein sequence, read N- to C-terminus: Small ribosomal subunit protein uS15 (89 aa).

It belongs to the universal ribosomal protein uS15 family. Part of the 30S ribosomal subunit. Forms a bridge to the 50S subunit in the 70S ribosome, contacting the 23S rRNA.

Functionally, one of the primary rRNA binding proteins, it binds directly to 16S rRNA where it helps nucleate assembly of the platform of the 30S subunit by binding and bridging several RNA helices of the 16S rRNA. In terms of biological role, forms an intersubunit bridge (bridge B4) with the 23S rRNA of the 50S subunit in the ribosome. In Desulforudis audaxviator (strain MP104C), this protein is Small ribosomal subunit protein uS15.